Reading from the N-terminus, the 289-residue chain is Lipoyl synthase 2 (289 aa).

The [4Fe-4S] cluster site is built by Cys43, Cys48, Cys54, Cys69, Cys73, Cys76, and Ser282. Residues 55-271 (YAQKTATFLL…GAVARDLGFA (217 aa)) enclose the Radical SAM core domain.

It belongs to the radical SAM superfamily. Lipoyl synthase family. It depends on [4Fe-4S] cluster as a cofactor.

It is found in the cytoplasm. The catalysed reaction is [[Fe-S] cluster scaffold protein carrying a second [4Fe-4S](2+) cluster] + N(6)-octanoyl-L-lysyl-[protein] + 2 oxidized [2Fe-2S]-[ferredoxin] + 2 S-adenosyl-L-methionine + 4 H(+) = [[Fe-S] cluster scaffold protein] + N(6)-[(R)-dihydrolipoyl]-L-lysyl-[protein] + 4 Fe(3+) + 2 hydrogen sulfide + 2 5'-deoxyadenosine + 2 L-methionine + 2 reduced [2Fe-2S]-[ferredoxin]. The protein operates within protein modification; protein lipoylation via endogenous pathway; protein N(6)-(lipoyl)lysine from octanoyl-[acyl-carrier-protein]: step 2/2. Catalyzes the radical-mediated insertion of two sulfur atoms into the C-6 and C-8 positions of the octanoyl moiety bound to the lipoyl domains of lipoate-dependent enzymes, thereby converting the octanoylated domains into lipoylated derivatives. This Gloeobacter violaceus (strain ATCC 29082 / PCC 7421) protein is Lipoyl synthase 2.